Consider the following 292-residue polypeptide: NAD kinase (292 aa).

Catalysis depends on Asp-73, which acts as the Proton acceptor. NAD(+)-binding positions include 73–74 (DG), 147–148 (NE), His-158, Arg-175, Asp-177, 188–193 (TAYSLS), and Gln-247.

Belongs to the NAD kinase family. The cofactor is a divalent metal cation.

It is found in the cytoplasm. The catalysed reaction is NAD(+) + ATP = ADP + NADP(+) + H(+). Functionally, involved in the regulation of the intracellular balance of NAD and NADP, and is a key enzyme in the biosynthesis of NADP. Catalyzes specifically the phosphorylation on 2'-hydroxyl of the adenosine moiety of NAD to yield NADP. In Pectobacterium atrosepticum (strain SCRI 1043 / ATCC BAA-672) (Erwinia carotovora subsp. atroseptica), this protein is NAD kinase.